Reading from the N-terminus, the 376-residue chain is D-alanine--D-alanine ligase (376 aa).

The 214-residue stretch at 153–366 folds into the ATP-grasp domain; the sequence is KLLLAGQGLP…YPELVHRLIQ (214 aa). Residue 185–240 participates in ATP binding; that stretch reads VEALGYPVFVKPARAGSSIGITRVTSREGLAAAVAEAVSHDPKVVVEAALVGREIE. Asp-317, Glu-333, and Asn-335 together coordinate Mg(2+).

This sequence belongs to the D-alanine--D-alanine ligase family. Requires Mg(2+) as cofactor. Mn(2+) serves as cofactor.

The protein localises to the cytoplasm. It catalyses the reaction 2 D-alanine + ATP = D-alanyl-D-alanine + ADP + phosphate + H(+). The protein operates within cell wall biogenesis; peptidoglycan biosynthesis. Functionally, cell wall formation. The protein is D-alanine--D-alanine ligase of Kineococcus radiotolerans (strain ATCC BAA-149 / DSM 14245 / SRS30216).